We begin with the raw amino-acid sequence, 157 residues long: Crossover junction endodeoxyribonuclease RuvC (157 aa).

Catalysis depends on residues Asp7, Glu66, and Asp139. The Mg(2+) site is built by Asp7, Glu66, and Asp139.

It belongs to the RuvC family. As to quaternary structure, homodimer which binds Holliday junction (HJ) DNA. The HJ becomes 2-fold symmetrical on binding to RuvC with unstacked arms; it has a different conformation from HJ DNA in complex with RuvA. In the full resolvosome a probable DNA-RuvA(4)-RuvB(12)-RuvC(2) complex forms which resolves the HJ. Mg(2+) serves as cofactor.

The protein localises to the cytoplasm. It carries out the reaction Endonucleolytic cleavage at a junction such as a reciprocal single-stranded crossover between two homologous DNA duplexes (Holliday junction).. In terms of biological role, the RuvA-RuvB-RuvC complex processes Holliday junction (HJ) DNA during genetic recombination and DNA repair. Endonuclease that resolves HJ intermediates. Cleaves cruciform DNA by making single-stranded nicks across the HJ at symmetrical positions within the homologous arms, yielding a 5'-phosphate and a 3'-hydroxyl group; requires a central core of homology in the junction. The consensus cleavage sequence is 5'-(A/T)TT(C/G)-3'. Cleavage occurs on the 3'-side of the TT dinucleotide at the point of strand exchange. HJ branch migration catalyzed by RuvA-RuvB allows RuvC to scan DNA until it finds its consensus sequence, where it cleaves and resolves the cruciform DNA. The protein is Crossover junction endodeoxyribonuclease RuvC of Campylobacter curvus (strain 525.92).